Reading from the N-terminus, the 378-residue chain is MKILVDENMPYARDLFSRLGEVTAVPGRPIPVAQLADADALMVRSVTKVNESLLAGKPIKFVGTATAGTDHVDEAWLKQAGIGFSAAPGCNAIAVVEYVFSSLLMLAERDGFSLYDRTVGIVGVGNVGRRLQARLEALGIKTLLCDPPRADRGDEGDFRSLDELVQRADILTFHTPLFKDGPYKTLHLADEKLIRSLKPGAILINACRGAVVDNTALLTCLNEGQKLSVVLDVWEGEPELNVELLKKVDIGTPHIAGYTLEGKARGTTQVFEAYSKFIGHEQHVALDTLLPAPEFGRITLHGPLDQPTLKRLVHLVYDVRRDDAPLRKVAGIPGEFDKLRKNYLERREWSSLYVICDDASAASLLCKLGFNAVHHPAR.

Substrate-binding residues include serine 45 and threonine 66. Positions 146 and 175 each coordinate NAD(+). Arginine 208 is a catalytic residue. Aspartate 232 is an NAD(+) binding site. Glutamate 237 is an active-site residue. The active-site Proton donor is histidine 254. An NAD(+)-binding site is contributed by glycine 257. Tyrosine 258 serves as a coordination point for substrate.

Belongs to the D-isomer specific 2-hydroxyacid dehydrogenase family. PdxB subfamily. In terms of assembly, homodimer.

The protein localises to the cytoplasm. It catalyses the reaction 4-phospho-D-erythronate + NAD(+) = (R)-3-hydroxy-2-oxo-4-phosphooxybutanoate + NADH + H(+). The protein operates within cofactor biosynthesis; pyridoxine 5'-phosphate biosynthesis; pyridoxine 5'-phosphate from D-erythrose 4-phosphate: step 2/5. Functionally, catalyzes the oxidation of erythronate-4-phosphate to 3-hydroxy-2-oxo-4-phosphonooxybutanoate. This chain is Erythronate-4-phosphate dehydrogenase, found in Escherichia coli (strain ATCC 8739 / DSM 1576 / NBRC 3972 / NCIMB 8545 / WDCM 00012 / Crooks).